Consider the following 984-residue polypeptide: Putative formate dehydrogenase SAB2186c (984 aa).

The region spanning 3 to 79 (EHLVVTLDGK…PMTVNTVNND (77 aa)) is the 2Fe-2S ferredoxin-type domain. Cys-37, Cys-48, Cys-51, and Cys-63 together coordinate [2Fe-2S] cluster. Residues 79-119 (DVKDAQKEALDRILEKHMLYCTVCDYNNGDCEIHNTMDAWG) enclose the 4Fe-4S His(Cys)3-ligated-type domain. His-95, Cys-99, Cys-102, Cys-109, Cys-147, Cys-150, Cys-153, Cys-157, Cys-190, Cys-193, Cys-196, Cys-200, Cys-264, Cys-267, Cys-271, and Cys-299 together coordinate [4Fe-4S] cluster. 4Fe-4S ferredoxin-type domains lie at 138 to 165 (PFYRYDPNQCILCGRCVEACQDIEVNET) and 181 to 211 (NDVPINESSCVSCGQCATVCPCNAMMEVNME). The formate dehydrogenase stretch occupies residues 252 to 984 (MRKERIKKTK…YVFPGNQVDK (733 aa)). Residues 257 to 313 (IKKTKTVCTYCGVGCSFEVWTKDREILKVQPSHDSPANKIATCVKGKFSWGHINSDQ) form the 4Fe-4S Mo/W bis-MGD-type domain.

It in the C-terminal section; belongs to the prokaryotic molybdopterin-containing oxidoreductase family. [2Fe-2S] cluster is required as a cofactor. The cofactor is [4Fe-4S] cluster. It depends on Mo-bis(molybdopterin guanine dinucleotide) as a cofactor.

The enzyme catalyses formate + NAD(+) = CO2 + NADH. This chain is Putative formate dehydrogenase SAB2186c, found in Staphylococcus aureus (strain bovine RF122 / ET3-1).